Consider the following 73-residue polypeptide: Translational regulator CsrA (73 aa).

The protein belongs to the CsrA/RsmA family. As to quaternary structure, homodimer; the beta-strands of each monomer intercalate to form a hydrophobic core, while the alpha-helices form wings that extend away from the core.

Its subcellular location is the cytoplasm. A translational regulator that binds mRNA to regulate translation initiation and/or mRNA stability. Usually binds in the 5'-UTR at or near the Shine-Dalgarno sequence preventing ribosome-binding, thus repressing translation. Its main target seems to be the major flagellin gene, while its function is anatagonized by FliW. The protein is Translational regulator CsrA of Lachnospira eligens (strain ATCC 27750 / DSM 3376 / VPI C15-48 / C15-B4) (Eubacterium eligens).